We begin with the raw amino-acid sequence, 100 residues long: Urease subunit gamma (100 aa).

It belongs to the urease gamma subunit family. As to quaternary structure, heterotrimer of UreA (gamma), UreB (beta) and UreC (alpha) subunits. Three heterotrimers associate to form the active enzyme.

It is found in the cytoplasm. The enzyme catalyses urea + 2 H2O + H(+) = hydrogencarbonate + 2 NH4(+). Its pathway is nitrogen metabolism; urea degradation; CO(2) and NH(3) from urea (urease route): step 1/1. This Kocuria rhizophila (strain ATCC 9341 / DSM 348 / NBRC 103217 / DC2201) protein is Urease subunit gamma.